Reading from the N-terminus, the 33-residue chain is Gastrin (33 aa).

Gln-1 carries the post-translational modification Pyrrolidone carboxylic acid. A Phenylalanine amide modification is found at Phe-33.

Belongs to the gastrin/cholecystokinin family.

It localises to the secreted. Functionally, gastrin stimulates the stomach mucosa to produce and secrete hydrochloric acid and the pancreas to secrete its digestive enzymes. It also stimulates smooth muscle contraction and increases blood circulation and water secretion in the stomach and intestine. In Cavia porcellus (Guinea pig), this protein is Gastrin (GAST).